The sequence spans 528 residues: Phosphoenolpyruvate carboxykinase (ATP) (528 aa).

Residues Arg56, Tyr192, and Lys198 each contribute to the substrate site. Residues Lys198, His217, and 233 to 241 (GLSGTGKTT) contribute to the ATP site. Residues Lys198 and His217 each coordinate Mn(2+). Asp254 serves as a coordination point for Mn(2+). Residues Glu282, Arg319, and Thr444 each contribute to the ATP site. Arg319 contacts substrate.

This sequence belongs to the phosphoenolpyruvate carboxykinase (ATP) family. Mn(2+) serves as cofactor.

The protein localises to the cytoplasm. It carries out the reaction oxaloacetate + ATP = phosphoenolpyruvate + ADP + CO2. The protein operates within carbohydrate biosynthesis; gluconeogenesis. Involved in the gluconeogenesis. Catalyzes the conversion of oxaloacetate (OAA) to phosphoenolpyruvate (PEP) through direct phosphoryl transfer between the nucleoside triphosphate and OAA. This Lysinibacillus sphaericus (strain C3-41) protein is Phosphoenolpyruvate carboxykinase (ATP).